Consider the following 264-residue polypeptide: Glutamate racemase (264 aa).

Residues 11–12 (DS) and 43–44 (YG) each bind substrate. The active-site Proton donor/acceptor is the C74. 75–76 (NT) is a substrate binding site. The Proton donor/acceptor role is filled by C193. 194–195 (TH) serves as a coordination point for substrate.

It belongs to the aspartate/glutamate racemases family.

The enzyme catalyses L-glutamate = D-glutamate. The protein operates within cell wall biogenesis; peptidoglycan biosynthesis. In terms of biological role, provides the (R)-glutamate required for cell wall biosynthesis. This chain is Glutamate racemase, found in Bifidobacterium longum (strain DJO10A).